A 61-amino-acid polypeptide reads, in one-letter code: Beta-defensin 133 (61 aa).

A signal peptide spans 1-23; that stretch reads MKIHVFLFVLFFFLVPIATRVKC. Disulfide bonds link cysteine 31–cysteine 59 and cysteine 38–cysteine 52.

The protein belongs to the beta-defensin family.

It is found in the secreted. Has antibacterial activity. The sequence is that of Beta-defensin 133 (DEFB133) from Homo sapiens (Human).